We begin with the raw amino-acid sequence, 1392 residues long: FERM and PDZ domain-containing protein 2 (1392 aa).

Residues 15–197 (VTLASALQVR…SEVERRVVEE (183 aa)) enclose the KIND domain. A disordered region spans residues 211–246 (SRLHQADGESPGAPASDALQPRRVSERSAETQSSLE). Residues 342–642 (CVVLLNGRCL…WFNAQTGSKH (301 aa)) form the FERM domain. The 87-residue stretch at 775-861 (GLFGEPNQDI…MAVRMIQNSP (87 aa)) folds into the PDZ 1 domain. Positions 903–930 (GRQSPHIHDQDRSVRGTEMAQGAGSCPP) are disordered. A compositionally biased stretch (basic and acidic residues) spans 908-917 (HIHDQDRSVR). Residues 937-1027 (TGEIYFVELV…VARLVLERRG (91 aa)) form an interaction with GRIN2A and GRIN2B region. 2 consecutive PDZ domains span residues 950–1035 (GTLG…PQCP) and 1079–1167 (RGLG…PEME). A disordered region spans residues 1186–1236 (CAGSEQSPSLDQEDNWRDSTSLDAGEGLSPGPESSYKDVRQVKGDREKERP). Basic and acidic residues predominate over residues 1220–1236 (SYKDVRQVKGDREKERP).

Interacts (via the second PDZ domain) with CTNND2 (via the extreme C-terminus). Interacts (via the second PDZ domain) with PKP4 (via the extreme C-terminus); the interaction directs FRMPD2 to the basolateral membranes. Interacts (via the second PDZ domain) with ARVCF (via the extreme C-terminus). Interacts (via the second PDZ domain) with NMDAR subunits GRIN2A/GLUN2A and GRIN2B/GLUN2B (via the extreme C-terminus); the interaction is direct and is likely to promote NMDAR-mediated neural signal transmission. Binds GRIN2A with lower affinity than GRIN2B. Interacts (via the third PDZ domain) with LRIT1 (via the extreme C-terminus); the interaction leads to their colocalization in photoreceptor synapses. Interacts with NOD2; the interaction is likely to trigger NOD2-mediated nuclear factor kappaB activation.

It localises to the cytoplasm. The protein resides in the postsynaptic density. It is found in the basolateral cell membrane. The protein localises to the cell junction. Its subcellular location is the tight junction. Its function is as follows. Functions as a scaffold protein and likely plays a role in N-methyl-D-aspartic acid receptor (NMDAR)-mediated synaptic excitatory transmission. May be involved in synapse formation in cone photoreceptor cells. May play a role in the regulation of tight junction formation. Binds phosphatidylinositol 3,4-bisphosphate (PtdIns(3,4)P2). May pNF-kappa-Blay a role in the regulation of NOD2-mediated NF-kappa-B activation in immune response. The protein is FERM and PDZ domain-containing protein 2 of Mus musculus (Mouse).